A 354-amino-acid polypeptide reads, in one-letter code: FAD synthetase 1, chloroplastic (354 aa).

The transit peptide at 1 to 75 (MLCGGSRASV…SQGDDHPELS (75 aa)) directs the protein to the chloroplast. The interval 228–248 (SVNTEEEDSKSKERGQVSSTR) is disordered.

It depends on Mg(2+) as a cofactor.

The protein localises to the plastid. It localises to the chloroplast. It catalyses the reaction FMN + ATP + H(+) = FAD + diphosphate. It participates in cofactor biosynthesis; FAD biosynthesis; FAD from FMN: step 1/1. In terms of biological role, catalyzes the adenylation of flavin mononucleotide (FMN) to form flavin adenine dinucleotide (FAD) coenzyme. The protein is FAD synthetase 1, chloroplastic of Arabidopsis thaliana (Mouse-ear cress).